Here is a 511-residue protein sequence, read N- to C-terminus: GMP synthase [glutamine-hydrolyzing] (511 aa).

Positions Asp-5 to Ile-195 constitute a Glutamine amidotransferase type-1 domain. Cys-82 acts as the Nucleophile in catalysis. Active-site residues include His-169 and Glu-171. In terms of domain architecture, GMPS ATP-PPase spans Trp-196–Arg-386. Ser-223–Ser-229 lines the ATP pocket.

In terms of assembly, homodimer.

The catalysed reaction is XMP + L-glutamine + ATP + H2O = GMP + L-glutamate + AMP + diphosphate + 2 H(+). It functions in the pathway purine metabolism; GMP biosynthesis; GMP from XMP (L-Gln route): step 1/1. Catalyzes the synthesis of GMP from XMP. In Campylobacter jejuni subsp. jejuni serotype O:2 (strain ATCC 700819 / NCTC 11168), this protein is GMP synthase [glutamine-hydrolyzing] (guaA).